The chain runs to 122 residues: Large ribosomal subunit protein bL12 (122 aa).

The protein belongs to the bacterial ribosomal protein bL12 family. Homodimer. Part of the ribosomal stalk of the 50S ribosomal subunit. Forms a multimeric L10(L12)X complex, where L10 forms an elongated spine to which 2 to 4 L12 dimers bind in a sequential fashion. Binds GTP-bound translation factors.

Forms part of the ribosomal stalk which helps the ribosome interact with GTP-bound translation factors. Is thus essential for accurate translation. The polypeptide is Large ribosomal subunit protein bL12 (Staphylococcus haemolyticus (strain JCSC1435)).